The sequence spans 159 residues: 2-C-methyl-D-erythritol 2,4-cyclodiphosphate synthase (159 aa).

2 residues coordinate a divalent metal cation: Asp10 and His12. 4-CDP-2-C-methyl-D-erythritol 2-phosphate-binding positions include 10 to 12 (DVH) and 36 to 37 (HS). His44 lines the a divalent metal cation pocket. 4-CDP-2-C-methyl-D-erythritol 2-phosphate-binding positions include 58 to 60 (DIG), 63 to 67 (FANTD), 134 to 137 (TTNE), and Arg144.

Belongs to the IspF family. As to quaternary structure, homotrimer. The cofactor is a divalent metal cation.

The catalysed reaction is 4-CDP-2-C-methyl-D-erythritol 2-phosphate = 2-C-methyl-D-erythritol 2,4-cyclic diphosphate + CMP. It functions in the pathway isoprenoid biosynthesis; isopentenyl diphosphate biosynthesis via DXP pathway; isopentenyl diphosphate from 1-deoxy-D-xylulose 5-phosphate: step 4/6. Involved in the biosynthesis of isopentenyl diphosphate (IPP) and dimethylallyl diphosphate (DMAPP), two major building blocks of isoprenoid compounds. Catalyzes the conversion of 4-diphosphocytidyl-2-C-methyl-D-erythritol 2-phosphate (CDP-ME2P) to 2-C-methyl-D-erythritol 2,4-cyclodiphosphate (ME-CPP) with a corresponding release of cytidine 5-monophosphate (CMP). This chain is 2-C-methyl-D-erythritol 2,4-cyclodiphosphate synthase, found in Cytophaga hutchinsonii (strain ATCC 33406 / DSM 1761 / CIP 103989 / NBRC 15051 / NCIMB 9469 / D465).